A 361-amino-acid polypeptide reads, in one-letter code: Holliday junction branch migration complex subunit RuvB (361 aa).

Positions 1 to 183 (MAEPSLVAAG…FGFTGHLEFY (183 aa)) are large ATPase domain (RuvB-L). Residues Leu-22, Arg-23, Gly-64, Lys-67, Thr-68, Thr-69, 130–132 (EDF), Arg-173, Tyr-183, and Arg-220 each bind ATP. A Mg(2+)-binding site is contributed by Thr-68. The segment at 184–254 (SVPELELVLR…SASAALDMYE (71 aa)) is small ATPAse domain (RuvB-S). Residues 257-361 (KKGLDRLDRS…VTGEWAPESQ (105 aa)) form a head domain (RuvB-H) region. Arg-312 and Arg-317 together coordinate DNA.

The protein belongs to the RuvB family. As to quaternary structure, homohexamer. Forms an RuvA(8)-RuvB(12)-Holliday junction (HJ) complex. HJ DNA is sandwiched between 2 RuvA tetramers; dsDNA enters through RuvA and exits via RuvB. An RuvB hexamer assembles on each DNA strand where it exits the tetramer. Each RuvB hexamer is contacted by two RuvA subunits (via domain III) on 2 adjacent RuvB subunits; this complex drives branch migration. In the full resolvosome a probable DNA-RuvA(4)-RuvB(12)-RuvC(2) complex forms which resolves the HJ.

The protein resides in the cytoplasm. The catalysed reaction is ATP + H2O = ADP + phosphate + H(+). The RuvA-RuvB-RuvC complex processes Holliday junction (HJ) DNA during genetic recombination and DNA repair, while the RuvA-RuvB complex plays an important role in the rescue of blocked DNA replication forks via replication fork reversal (RFR). RuvA specifically binds to HJ cruciform DNA, conferring on it an open structure. The RuvB hexamer acts as an ATP-dependent pump, pulling dsDNA into and through the RuvAB complex. RuvB forms 2 homohexamers on either side of HJ DNA bound by 1 or 2 RuvA tetramers; 4 subunits per hexamer contact DNA at a time. Coordinated motions by a converter formed by DNA-disengaged RuvB subunits stimulates ATP hydrolysis and nucleotide exchange. Immobilization of the converter enables RuvB to convert the ATP-contained energy into a lever motion, pulling 2 nucleotides of DNA out of the RuvA tetramer per ATP hydrolyzed, thus driving DNA branch migration. The RuvB motors rotate together with the DNA substrate, which together with the progressing nucleotide cycle form the mechanistic basis for DNA recombination by continuous HJ branch migration. Branch migration allows RuvC to scan DNA until it finds its consensus sequence, where it cleaves and resolves cruciform DNA. The chain is Holliday junction branch migration complex subunit RuvB from Pseudarthrobacter chlorophenolicus (strain ATCC 700700 / DSM 12829 / CIP 107037 / JCM 12360 / KCTC 9906 / NCIMB 13794 / A6) (Arthrobacter chlorophenolicus).